The sequence spans 61 residues: Photosystem II reaction center protein K (61 aa).

A propeptide spanning residues methionine 1–alanine 24 is cleaved from the precursor. The helical transmembrane segment at isoleucine 36 to alanine 56 threads the bilayer.

This sequence belongs to the PsbK family. In terms of assembly, PSII is composed of 1 copy each of membrane proteins PsbA, PsbB, PsbC, PsbD, PsbE, PsbF, PsbH, PsbI, PsbJ, PsbK, PsbL, PsbM, PsbT, PsbX, PsbY, PsbZ, Psb30/Ycf12, at least 3 peripheral proteins of the oxygen-evolving complex and a large number of cofactors. It forms dimeric complexes.

It localises to the plastid. It is found in the chloroplast thylakoid membrane. Functionally, one of the components of the core complex of photosystem II (PSII). PSII is a light-driven water:plastoquinone oxidoreductase that uses light energy to abstract electrons from H(2)O, generating O(2) and a proton gradient subsequently used for ATP formation. It consists of a core antenna complex that captures photons, and an electron transfer chain that converts photonic excitation into a charge separation. This Eucalyptus globulus subsp. globulus (Tasmanian blue gum) protein is Photosystem II reaction center protein K.